A 139-amino-acid chain; its full sequence is Self-incompatibility protein S1 (139 aa).

Residues 1-19 (MNIFYVIVLLSFFLSKSSG) form the signal peptide. N-linked (GlcNAc...) asparagine glycosylation occurs at asparagine 51.

Belongs to the plant self-incompatibility (S1) protein family. Post-translationally, glycosylated (S1b) and unglocosylated (S1a) forms coexist. As to expression, accumulates in the stigma (at protein level).

Its subcellular location is the secreted. Its function is as follows. Exhibits specific pollen self-inhibitory activity thus preventing self-fertilization. This chain is Self-incompatibility protein S1, found in Papaver rhoeas (Common poppy).